Reading from the N-terminus, the 821-residue chain is E3 ubiquitin-protein ligase RSP5 (821 aa).

The region spanning Met1–Arg112 is the C2 domain. Polar residues-rich tracts occupy residues Thr133–Asn144 and Leu188–Ser201. 2 disordered regions span residues Thr133–Arg239 and Arg255–Asp359. Positions Gln202–Gly217 are enriched in low complexity. Positions Gly231–Ala264 constitute a WW 1 domain. Positions Arg255 to Arg272 are enriched in polar residues. Positions Leu281–Thr296 are enriched in basic and acidic residues. The segment covering Gly297–Thr312 has biased composition (polar residues). Over residues Ala320–Gly339 the composition is skewed to low complexity. WW domains are found at residues Gly339–Arg372 and Gly399–Leu432. Positions Ser488–Glu821 constitute an HECT domain. The active-site Glycyl thioester intermediate is Cys789.

Belongs to the RSP5/NEDD4 family. Interacts with apyA and creD.

It localises to the cytoplasm. It catalyses the reaction S-ubiquitinyl-[E2 ubiquitin-conjugating enzyme]-L-cysteine + [acceptor protein]-L-lysine = [E2 ubiquitin-conjugating enzyme]-L-cysteine + N(6)-ubiquitinyl-[acceptor protein]-L-lysine.. It functions in the pathway protein modification; protein ubiquitination. E3 ubiquitin-protein ligase which accepts ubiquitin from an E2 ubiquitin-conjugating enzyme in the form of a thioester and then directly transfers the ubiquitin to targeted substrates. Probably involved in the regulatory network controlling carbon source utilization. Ubiquitinates 'Lys-528' of the uric acid/xanthine transporter uapA at the cell membrane, leading to its internalization, sorting into the endosomal pathway to the vacuolar lumen where it is eventually degraded. This chain is E3 ubiquitin-protein ligase RSP5 (hulA), found in Emericella nidulans (strain FGSC A4 / ATCC 38163 / CBS 112.46 / NRRL 194 / M139) (Aspergillus nidulans).